Reading from the N-terminus, the 141-residue chain is Hemoglobin subunit alpha (141 aa).

Positions 1 to 141 constitute a Globin domain; that stretch reads VLSPADKTNV…VSTVLTSKYR (141 aa). Ser3 is subject to Phosphoserine. N6-succinyllysine is present on Lys7. The residue at position 8 (Thr8) is a Phosphothreonine. At Lys11 the chain carries N6-succinyllysine. Residue Lys16 is modified to N6-acetyllysine; alternate. Lys16 bears the N6-succinyllysine; alternate mark. Residue Tyr24 is modified to Phosphotyrosine. Residue Ser35 is modified to Phosphoserine. The residue at position 40 (Lys40) is an N6-succinyllysine. Ser49 bears the Phosphoserine mark. An O2-binding site is contributed by His58. His87 is a heme b binding site. Ser102 is modified (phosphoserine). A Phosphothreonine modification is found at Thr108. Ser124 and Ser131 each carry phosphoserine. Residues Thr134 and Thr137 each carry the phosphothreonine modification. Residue Ser138 is modified to Phosphoserine.

Belongs to the globin family. Heterotetramer of two alpha chains and two beta chains. As to expression, red blood cells.

Its function is as follows. Involved in oxygen transport from the lung to the various peripheral tissues. The protein is Hemoglobin subunit alpha of Otospermophilus beecheyi (California ground squirrel).